The primary structure comprises 603 residues: Sabinene hydrate synthase, chloroplastic (603 aa).

The transit peptide at 1 to 47 (MSTISINHVGLLRNPLHGKSKRASINKSWSLCLPRSSSASRLVKPCR) directs the protein to the chloroplast. Positions 357 and 361 each coordinate Mn(2+). Positions 357–361 (DDVYD) match the DDXXD motif motif. 2 homodimerization regions span residues 363–369 (YGTLDEL) and 435–472 (EAEW…VSIP). The Mn(2+) site is built by D501 and E509.

The protein belongs to the terpene synthase family. Homodimer. It depends on Mn(2+) as a cofactor. Mg(2+) serves as cofactor.

It localises to the plastid. The protein localises to the chloroplast. It catalyses the reaction (2E)-geranyl diphosphate + H2O = sabinene hydrate + diphosphate. It functions in the pathway secondary metabolite biosynthesis; terpenoid biosynthesis. Its function is as follows. Involved in the biosynthesis of phenolic monoterpenes natural products. Monoterpene synthase which catalyzes the conversion of geranyl diphosphate (GPP) to sabinene hydrate, mainly (Z)-sabinene hydrate and to a lower extent (E)-sabinene hydrate, and the formation of minor amounts and traces of several other monoterpenes (e.g. mainly alpha-thujene, alpha-pinene and myrcene). This is Sabinene hydrate synthase, chloroplastic from Thymus vulgaris (Thyme).